A 240-amino-acid polypeptide reads, in one-letter code: Transposase for insertion sequence element IS3411 (240 aa).

The Integrase catalytic domain occupies 125-240; that stretch reads VAERPDQLWV…RASMVFTKRR (116 aa).

Involved in the transposition of the insertion sequence. The chain is Transposase for insertion sequence element IS3411 from Escherichia coli.